The chain runs to 238 residues: Thymidine kinase, cytosolic (238 aa).

Position 2 is an N-acetylserine (serine 2). Serine 2 and serine 13 each carry phosphoserine. Residues 26–33 (GPMFSGKS), 58–60 (DTR), and 97–100 (DEGQ) each bind ATP. Glutamate 98 acts as the Proton acceptor in catalysis. Phenylalanine 128 is a substrate binding site. Zn(2+) is bound by residues cysteine 153 and cysteine 156. Residues 172–176 (VEVIG) and tyrosine 181 each bind substrate. Residues cysteine 185 and cysteine 188 each coordinate Zn(2+). Positions 206–208 (KEN) match the KEN box motif. Serine 235 bears the Phosphoserine mark.

Belongs to the thymidine kinase family. As to quaternary structure, homotetramer. Tetramerization from dimerization is induced by ATP and increases catalytic efficiency due to a high affinity for thymidine. Tetramerization is inhibited by phosphorylation at Ser-13. Interacts (via the KEN box) with FZR1. Post-translationally, phosphorylated on Ser-13 in mitosis. Phosphorylation of Ser-13 by CDK1 during mitosis reduces homotetramerization and catalytic efficiency when DNA replication is complete and intracellular TK1 is still present at a high level. In terms of processing, polyubiquitinated. Postmitosis, ubiquitination leads to proteasomal degradation. The KEN box sequence located at the C-terminal region targets for degradation by the anaphase promoting complex (APC/C) activated and rate-limited by FZR1.

Its subcellular location is the cytoplasm. It carries out the reaction thymidine + ATP = dTMP + ADP + H(+). Functionally, cell-cycle-regulated enzyme of importance in nucleotide metabolism. Catalyzes the first enzymatic step in the salvage pathway converting thymidine into thymidine monophosphate. Transcriptional regulation limits expression to the S phase of the cell cycle and transient expression coincides with the oscillation in the intracellular dTTP concentration. The chain is Thymidine kinase, cytosolic (TK1) from Bos taurus (Bovine).